A 526-amino-acid chain; its full sequence is Peptide chain release factor 3 (526 aa).

One can recognise a tr-type G domain in the interval glutamate 9–glutamine 277. GTP-binding positions include serine 18–threonine 25, aspartate 86–histidine 90, and asparagine 140–aspartate 143.

Belongs to the TRAFAC class translation factor GTPase superfamily. Classic translation factor GTPase family. PrfC subfamily.

Its subcellular location is the cytoplasm. Increases the formation of ribosomal termination complexes and stimulates activities of RF-1 and RF-2. It binds guanine nucleotides and has strong preference for UGA stop codons. It may interact directly with the ribosome. The stimulation of RF-1 and RF-2 is significantly reduced by GTP and GDP, but not by GMP. The sequence is that of Peptide chain release factor 3 from Methylococcus capsulatus (strain ATCC 33009 / NCIMB 11132 / Bath).